Here is a 142-residue protein sequence, read N- to C-terminus: Hemoglobin subunit alpha-1 (142 aa).

Position 1 is an N-acetylserine (Ser-1). Residues 1–142 (SLSDKDKAAV…VALALAQRYR (142 aa)) enclose the Globin domain. Position 59 (His-59) interacts with O2. His-88 provides a ligand contact to heme b.

Belongs to the globin family. In terms of assembly, hb1 is a heterotetramer of two alpha-2 chains and two beta chains. Red blood cells.

In terms of biological role, involved in oxygen transport from gills to the various peripheral tissues. This is Hemoglobin subunit alpha-1 (hba1) from Notothenia neglecta (Yellowbelly rockcod).